The chain runs to 109 residues: MRSESEVSISTVFLGEYVGDDEKSLGILMGGSTSCMVGMNSAFVNDTIRLDLPTPSSPQITTRIVSLVIVLFNTLVFRSPLFLFSIFICLIYKFHSCFEGKPLYQMLKI.

2 helical membrane passes run 24–44 (SLGI…SAFV) and 68–88 (VIVL…SIFI).

It localises to the membrane. This is an uncharacterized protein from Saccharomyces cerevisiae (strain ATCC 204508 / S288c) (Baker's yeast).